We begin with the raw amino-acid sequence, 947 residues long: Zinc finger protein 268 (947 aa).

One can recognise a KRAB domain in the interval 81-152 (LSFMDVFVDF…QAQVPNQTCP (72 aa)). Position 178 is a phosphoserine; by TBK1 (Ser178). 24 consecutive C2H2-type zinc fingers follow at residues 276 to 298 (FGCSCCEKAFSSKSYLLVHQQTH), 304 to 326 (YGCNECGKDFSSKSYLIVHQRIH), 332 to 354 (HECSECRKTFSFHSQLVIHQRIH), 360 to 382 (YECCECGKVFSRKDQLVSHQKTH), 388 to 410 (YVCNECGKAFGLKSQLIIHERIH), 416 to 438 (YECNECQKAFNTKSNLMVHQRTH), 444 to 466 (YVCSDCGKAFTFKSQLIVHQGIH), 472 to 494 (YGCIQCGKGFSLKSQLIVHQRSH), 500 to 522 (YVCNECGKAFRSKSYLIIHTRTH), 528 to 550 (HECNNCGKAFSFKSQLIIHQRIH), 556 to 578 (YECHECGKAFSRKYQLISHQRTH), 584 to 606 (YECTDCGKAFGLKSQLIIHQRTH), 612 to 634 (FECSECQKAFNTKSNLIVHQRTH), 640 to 662 (YSCNECGKAFTFKSQLIVHKGVH), 668 to 690 (YGCSQCAKTFSLKSQLIVHQRSH), 696 to 718 (YGCSECGKAFRSKSYLIIHMRTH), 724 to 746 (HECRECGKSFSFNSQLIVHQRIH), 752 to 774 (YECSECGKAFNRKDQLISHQRTH), 780 to 802 (YGCSECGKAFSSKSYLIIHMRTH), 808 to 830 (YECNECGKAFIWKSLLIVHERTH), 836 to 858 (YKCSQCEKSFSGKLRLLVHQRMH), 864 to 886 (YECSECGKAFIRNSQLIVHQRTH), 892 to 914 (YGCNECGKTFSQKSILSAHQRTH), and 920 to 942 (CKCTECGKAFCWKSQLIMHQRTH).

It belongs to the krueppel C2H2-type zinc-finger protein family. As to quaternary structure, interacts (via the KRAB domain) with TRIM28 (via the RBCC domain); the interaction increases ZNF268 nuclear localization activity. Isoform 2 interacts with CHUK and IKBKB; the interaction is further increased in a TNF-alpha-dependent manner. Interacts with TOLLIP; this interaction is impaired by ZNF268 phosphorylation at Ser-178. Forms a ternary complex with TBK1 and SETD4; the interaction between SETD4 and TBK1 is ZNF268-dependent and leads to TBK1 monomethylation. Post-translationally, phosphorylation at Ser-178 stabilizes the protein by interfering with its binding to TOLLIP, hence impairing its degradation by Tollip-mediated selective autophagy system. In terms of tissue distribution, overexpressed in ovarian cancer tissues compared to normal ovarian tissues. Isoform 1 and isoform 2 are expressed in squamous epithelium tissues. Isoform 2 is overexpressed in squamous cervical cancer (at protein level). Expressed in blood cells. Isoform 1 is expressed in pancreas, lung, skeletal muscle, heart, placenta, liver, kidney and brain. Isoform 2 expressed in chronic lymphocytic leukemia (CLL) and several tumor cell lines. Isoform 3 is expressed in several tumor cells. Isoform 5 is expressed in fetal liver and several tumor cells. Isoform 6 is weakly expressed in brain, lung amd small intestin and in several tumor cells. Isoform 7 is expressed in fetal liver and several tumor cells.

Its subcellular location is the nucleus. It is found in the cytoplasm. Its function is as follows. Acts as a transcriptional repressor. Inhibits erythroid differentiation and tumor cell proliferation. Plays a role during ovarian cancer development and progression. Functionally, contributes to cervical carcinogenesis in part through the TNF-alpha-induced NF-kappa-B signaling pathway by interacting with the I-kappa-B-kinase (IKK) core complex. Involved in the regulation of antiviral interferon signaling. During viral infection, recruits SETD4 to TBK1, leading to TBK1 monomethylation, which is critical for the assembly of TBK1 complex and IRF3 signaling. The sequence is that of Zinc finger protein 268 (ZNF268) from Homo sapiens (Human).